The following is a 91-amino-acid chain: Small ribosomal subunit protein bS20 (91 aa).

A disordered region spans residues 72–91 (KNAASRQKSRLAKKLNGLSA).

This sequence belongs to the bacterial ribosomal protein bS20 family.

Binds directly to 16S ribosomal RNA. This Halalkalibacterium halodurans (strain ATCC BAA-125 / DSM 18197 / FERM 7344 / JCM 9153 / C-125) (Bacillus halodurans) protein is Small ribosomal subunit protein bS20.